We begin with the raw amino-acid sequence, 409 residues long: Argininosuccinate synthase (409 aa).

ATP is bound by residues 10–18 (AYSGGLDTS) and A37. Residues Y90 and S95 each coordinate L-citrulline. G120 provides a ligand contact to ATP. 3 residues coordinate L-aspartate: T122, N126, and D127. Residue N126 participates in L-citrulline binding. Residues R130, S182, S191, E267, and Y279 each coordinate L-citrulline.

The protein belongs to the argininosuccinate synthase family. Type 1 subfamily. In terms of assembly, homotetramer.

It localises to the cytoplasm. The catalysed reaction is L-citrulline + L-aspartate + ATP = 2-(N(omega)-L-arginino)succinate + AMP + diphosphate + H(+). Its pathway is amino-acid biosynthesis; L-arginine biosynthesis; L-arginine from L-ornithine and carbamoyl phosphate: step 2/3. The protein is Argininosuccinate synthase of Thiobacillus denitrificans (strain ATCC 25259 / T1).